The following is a 170-amino-acid chain: Peptide deformylase (170 aa).

Fe cation is bound by residues C91 and H133. Residue E134 is part of the active site. H137 provides a ligand contact to Fe cation.

It belongs to the polypeptide deformylase family. Requires Fe(2+) as cofactor.

It carries out the reaction N-terminal N-formyl-L-methionyl-[peptide] + H2O = N-terminal L-methionyl-[peptide] + formate. Its function is as follows. Removes the formyl group from the N-terminal Met of newly synthesized proteins. Requires at least a dipeptide for an efficient rate of reaction. N-terminal L-methionine is a prerequisite for activity but the enzyme has broad specificity at other positions. The chain is Peptide deformylase from Histophilus somni (strain 2336) (Haemophilus somnus).